We begin with the raw amino-acid sequence, 1336 residues long: Glutamate receptor ionotropic, NMDA 2D (1336 aa).

The signal sequence occupies residues 1–27; it reads MRGAGGPRGPRGPAKMLLLLALACASP. The Extracellular portion of the chain corresponds to 28–582; it reads FPEEAPGPGG…SPSAFLEPYS (555 aa). Asparagine 92 carries N-linked (GlcNAc...) asparagine glycosylation. The cysteines at positions 104 and 348 are disulfide-linked. Residues asparagine 352, asparagine 366, asparagine 384, and asparagine 467 are each glycosylated (N-linked (GlcNAc...) asparagine). Disulfide bonds link cysteine 455–cysteine 483 and cysteine 462–cysteine 484. L-glutamate contacts are provided by serine 539, threonine 541, and arginine 546. An N-linked (GlcNAc...) asparagine glycan is attached at asparagine 569. The helical transmembrane segment at 583 to 604 threads the bilayer; that stretch reads PAVWVMMFVMCLTVVAVTVFIF. Residues 605 to 629 lie on the Cytoplasmic side of the membrane; it reads EYLSPVGYNRSLATGKRPGGSTFTI. The discontinuously helical intramembrane region spans 630-641; sequence GKSIWLLWALVF. Residues 631 to 650 form a pore-forming region; sequence KSIWLLWALVFNNSVPVENP. Residues 642 to 653 lie on the Cytoplasmic side of the membrane; it reads NNSVPVENPRGT. The chain crosses the membrane as a helical span at residues 654–674; that stretch reads TSKIMVLVWAFFAVIFLASYT. The Extracellular portion of the chain corresponds to 675–843; sequence ANLAAFMIQE…EVMSSKLDID (169 aa). L-glutamate is bound by residues serine 717, threonine 718, and aspartate 759. Cysteine 773 and cysteine 828 are joined by a disulfide. A helical transmembrane segment spans residues 844 to 867; sequence NMAGVFYMLLVAMGLSLLVFAWEH. The Cytoplasmic segment spans residues 868-1336; the sequence is LVYWRLRHCL…AHFSSLESEV (469 aa). 3 disordered regions span residues 900 to 934, 981 to 1123, and 1225 to 1336; these read EAAP…PFVP, RAAP…SLGG, and RCGC…ESEV. Residues 902-932 are compositionally biased toward pro residues; sequence APPPAKPPPPPQPLPSPAYPAPRPAPGPAPF. The span at 981–991 shows a compositional bias: low complexity; that stretch reads RAAPRGAAGRP. Positions 992–1006 are enriched in pro residues; it reads LSPPAAQPPQKPPPS. A compositionally biased stretch (low complexity) spans 1035-1044; it reads AAAATAVGPP. Gly residues predominate over residues 1074 to 1089; sequence PGAGGAGGTGGAGGGA. Over residues 1091 to 1104 the composition is skewed to pro residues; it reads AAPPPCRAAPPPCP. A compositionally biased stretch (basic residues) spans 1225-1240; the sequence is RCGCPRSHPHRPRASH. Arginine 1316 bears the Omega-N-methylarginine mark. Residue serine 1326 is modified to Phosphoserine. A PDZ-binding motif is present at residues 1334–1336; the sequence is SEV.

This sequence belongs to the glutamate-gated ion channel (TC 1.A.10.1) family. NR2D/GRIN2D subfamily. In terms of assembly, heterotetramer. Forms heterotetrameric channels composed of two GluN1/zeta subunits (GRIN1), and two identical GluN2/epsilon subunits (GRIN2A, GRIN2B, GRIN2C or GRIN2D) or GluN3 subunits (GRIN3A or GRIN3B) (in vitro). In vivo, the subunit composition may depend on the expression levels of the different subunits. Interacts with PDZ domains of PATJ and DLG4.

The protein localises to the cell membrane. Its subcellular location is the postsynaptic cell membrane. The enzyme catalyses Ca(2+)(in) = Ca(2+)(out). It catalyses the reaction Na(+)(in) = Na(+)(out). The catalysed reaction is K(+)(in) = K(+)(out). Component of N-methyl-D-aspartate (NMDA) receptors (NMDARs) that function as heterotetrameric, ligand-gated cation channels with high calcium permeability and voltage-dependent block by Mg(2+). Participates in synaptic plasticity for learning and memory formation. Channel activation requires binding of the neurotransmitter L-glutamate to the GluN2 subunit, glycine or D-serine binding to the GluN1 subunit, plus membrane depolarization to eliminate channel inhibition by Mg(2+). NMDARs mediate simultaneously the potasium efflux and the influx of calcium and sodium. Each GluN2 subunit confers differential attributes to channel properties, including activation, deactivation and desensitization kinetics, pH sensitivity, Ca2(+) permeability, and binding to allosteric modulators. This chain is Glutamate receptor ionotropic, NMDA 2D, found in Homo sapiens (Human).